A 527-amino-acid chain; its full sequence is Phosphoenolpyruvate carboxykinase (ATP) (527 aa).

Substrate-binding residues include arginine 55, tyrosine 191, and lysine 197. Residues lysine 197, histidine 216, and 232-240 (GLSGTGKTT) contribute to the ATP site. Mn(2+) is bound by residues lysine 197 and histidine 216. Aspartate 253 lines the Mn(2+) pocket. ATP contacts are provided by glutamate 281, arginine 318, and threonine 443. Residue arginine 318 participates in substrate binding.

It belongs to the phosphoenolpyruvate carboxykinase (ATP) family. Requires Mn(2+) as cofactor.

Its subcellular location is the cytoplasm. It catalyses the reaction oxaloacetate + ATP = phosphoenolpyruvate + ADP + CO2. It participates in carbohydrate biosynthesis; gluconeogenesis. Functionally, involved in the gluconeogenesis. Catalyzes the conversion of oxaloacetate (OAA) to phosphoenolpyruvate (PEP) through direct phosphoryl transfer between the nucleoside triphosphate and OAA. The chain is Phosphoenolpyruvate carboxykinase (ATP) from Brevibacillus brevis (strain 47 / JCM 6285 / NBRC 100599).